The following is a 325-amino-acid chain: LIM and senescent cell antigen-like-containing domain protein 1 (325 aa).

Ala-2 carries the post-translational modification N-acetylalanine. LIM zinc-binding domains lie at 10-62, 71-121, 135-184, 193-243, and 252-303; these read CERC…CEHD, CHQC…CRPC, CQKC…CLPC, CGAC…CETH, and CFHC…CKKC.

In terms of assembly, component of the heterotrimeric IPP (ILK-PINCH-PARVIN) complex composed of ILK, LIMS1/PINCH and PARVA; the complex binds to F-actin via the C-terminal tail of LIMS1 and the N-terminal region of PARVA, promoting F-actin filament bundling. Formation of the IPP complex is dependent on protein kinase C and precedes integrin-mediated cell adhesion and spreading. Competes with LIMS2 for interaction with ILK. Interacts with SH3/SH2 adapter NCK2, thereby linking the complex to cell surface receptors. Interacts (via LIM zinc-binding 5) with TGFB1I1.

It localises to the cell junction. It is found in the focal adhesion. The protein localises to the cell membrane. Its function is as follows. Within the IPP (ILK-PINCH-PARVIN) complex, binds to F-actin, promoting F-actin bundling, a process required to generate force for actin cytoskeleton reorganization and subsequent dynamic cell adhesion events such as cell spreading and migration. This chain is LIM and senescent cell antigen-like-containing domain protein 1 (Lims1), found in Mus musculus (Mouse).